A 236-amino-acid polypeptide reads, in one-letter code: tRNA (guanine-N(1)-)-methyltransferase (236 aa).

Residues glycine 113 and 133-138 (IGDYVL) contribute to the S-adenosyl-L-methionine site.

Belongs to the RNA methyltransferase TrmD family. Homodimer.

The protein localises to the cytoplasm. It carries out the reaction guanosine(37) in tRNA + S-adenosyl-L-methionine = N(1)-methylguanosine(37) in tRNA + S-adenosyl-L-homocysteine + H(+). In terms of biological role, specifically methylates guanosine-37 in various tRNAs. The chain is tRNA (guanine-N(1)-)-methyltransferase from Lachnospira eligens (strain ATCC 27750 / DSM 3376 / VPI C15-48 / C15-B4) (Eubacterium eligens).